The sequence spans 120 residues: NADH-ubiquinone oxidoreductase chain 3 (120 aa).

3 helical membrane-spanning segments follow: residues 7-27 (FVYILVLLAISTGLSVILFFL), 62-82 (FYLVAILFLIFDLEITFLFPF), and 89-109 (MTLLSYSLMLIFLIILTIGFI).

This sequence belongs to the complex I subunit 3 family.

It localises to the mitochondrion membrane. It carries out the reaction a ubiquinone + NADH + 5 H(+)(in) = a ubiquinol + NAD(+) + 4 H(+)(out). Functionally, core subunit of the mitochondrial membrane respiratory chain NADH dehydrogenase (Complex I) that is believed to belong to the minimal assembly required for catalysis. Complex I functions in the transfer of electrons from NADH to the respiratory chain. The immediate electron acceptor for the enzyme is believed to be ubiquinone. In Dictyostelium discoideum (Social amoeba), this protein is NADH-ubiquinone oxidoreductase chain 3 (nad3).